The following is a 477-amino-acid chain: Glycogen synthase (477 aa).

ADP-alpha-D-glucose is bound at residue lysine 15.

This sequence belongs to the glycosyltransferase 1 family. Bacterial/plant glycogen synthase subfamily.

The enzyme catalyses [(1-&gt;4)-alpha-D-glucosyl](n) + ADP-alpha-D-glucose = [(1-&gt;4)-alpha-D-glucosyl](n+1) + ADP + H(+). It participates in glycan biosynthesis; glycogen biosynthesis. Its function is as follows. Synthesizes alpha-1,4-glucan chains using ADP-glucose. This Shigella dysenteriae serotype 1 (strain Sd197) protein is Glycogen synthase.